Consider the following 567-residue polypeptide: Proline--tRNA ligase (567 aa).

It belongs to the class-II aminoacyl-tRNA synthetase family. ProS type 1 subfamily. In terms of assembly, homodimer.

Its subcellular location is the cytoplasm. It carries out the reaction tRNA(Pro) + L-proline + ATP = L-prolyl-tRNA(Pro) + AMP + diphosphate. Catalyzes the attachment of proline to tRNA(Pro) in a two-step reaction: proline is first activated by ATP to form Pro-AMP and then transferred to the acceptor end of tRNA(Pro). As ProRS can inadvertently accommodate and process non-cognate amino acids such as alanine and cysteine, to avoid such errors it has two additional distinct editing activities against alanine. One activity is designated as 'pretransfer' editing and involves the tRNA(Pro)-independent hydrolysis of activated Ala-AMP. The other activity is designated 'posttransfer' editing and involves deacylation of mischarged Ala-tRNA(Pro). The misacylated Cys-tRNA(Pro) is not edited by ProRS. This Geobacillus thermodenitrificans (strain NG80-2) protein is Proline--tRNA ligase.